The following is a 268-amino-acid chain: Methionine aminopeptidase (268 aa).

Substrate is bound at residue H79. The a divalent metal cation site is built by D97, D108, and H172. H179 contacts substrate. Residues E205 and E236 each coordinate a divalent metal cation.

This sequence belongs to the peptidase M24A family. Methionine aminopeptidase type 1 subfamily. As to quaternary structure, monomer. Co(2+) is required as a cofactor. Requires Zn(2+) as cofactor. Mn(2+) serves as cofactor. It depends on Fe(2+) as a cofactor.

It carries out the reaction Release of N-terminal amino acids, preferentially methionine, from peptides and arylamides.. Its function is as follows. Removes the N-terminal methionine from nascent proteins. The N-terminal methionine is often cleaved when the second residue in the primary sequence is small and uncharged (Met-Ala-, Cys, Gly, Pro, Ser, Thr, or Val). Requires deformylation of the N(alpha)-formylated initiator methionine before it can be hydrolyzed. The protein is Methionine aminopeptidase of Haemophilus influenzae (strain ATCC 51907 / DSM 11121 / KW20 / Rd).